The sequence spans 673 residues: Outer spore wall assembly protein SHE10 (673 aa).

The first 24 residues, 1–24, serve as a signal peptide directing secretion; sequence MRRVRGVGNLLVTILVVLIGFKQA. A coiled-coil region spans residues 503–568; that stretch reads ILRSQANIAF…LALEQGQGQE (66 aa). Disordered regions lie at residues 530 to 551 and 587 to 673; these read LEQERQIQEQKEREQQELAENE and TPLG…SQAN. Composition is skewed to acidic residues over residues 593–605 and 612–629; these read DNTDYENALDDAD and GDSEDNFYDSYEGDEEDA. Residues 617–647 adopt a coiled-coil conformation; that stretch reads NFYDSYEGDEEDASRELERLERESAERETLD. The span at 630–673 shows a compositional bias: basic and acidic residues; the sequence is SRELERLERESAERETLDRLELGQRQKLQEEQHRDELHHSSQAN.

Belongs to the SHE10 family. In terms of assembly, component of the mitochondria-localized RNase mitochondrial RNA-processing (RNase MRP) composed of one single RNA encoded by the NME1 gene and at least 31 proteins. Absent in the nucleus-localized RNase MRP (NuMRP).

It is found in the mitochondrion. Involved in spore wall assembly. May be a component of the mitochondrial RNase MRP (MtMRP), a ribonucleoprotein endoribonuclease involved in the cleaving RNA transcripts to generate primers for DNA replication in mitochondria. This is Outer spore wall assembly protein SHE10 from Lachancea thermotolerans (strain ATCC 56472 / CBS 6340 / NRRL Y-8284) (Yeast).